The primary structure comprises 384 residues: Beta-glucuronosyltransferase GlcAT14C (384 aa).

The Cytoplasmic segment spans residues 1–11; the sequence is MKRSHISSPRS. Residues 12–34 form a signal-anchor for type II membrane protein membrane-spanning segment; that stretch reads YSRPAISIFGVFLLFLLVLTLSS. Topologically, residues 35–384 are lumenal; the sequence is RKPSDSSSGL…HENFRAKQCK (350 aa). N156, N285, and N306 each carry an N-linked (GlcNAc...) asparagine glycan.

Belongs to the glycosyltransferase 14 family.

The protein localises to the golgi apparatus membrane. Functionally, beta-glucuronosyltransferase involved in the biosynthesis of type II arabinogalactan (AG). Modifies both the beta-1,6-linked galactan and beta-1,3-linked galactan present in type II AG. In Arabidopsis thaliana (Mouse-ear cress), this protein is Beta-glucuronosyltransferase GlcAT14C.